We begin with the raw amino-acid sequence, 637 residues long: Threonine--tRNA ligase (637 aa).

A TGS domain is found at 1–61 (MLNITLPDCS…VEDSAVQIIT (61 aa)). The catalytic stretch occupies residues 242–533 (DHRKLGKQLD…LIENHAGSFP (292 aa)). Zn(2+)-binding residues include C333, H384, and H510.

Belongs to the class-II aminoacyl-tRNA synthetase family. Homodimer. It depends on Zn(2+) as a cofactor.

The protein resides in the cytoplasm. The enzyme catalyses tRNA(Thr) + L-threonine + ATP = L-threonyl-tRNA(Thr) + AMP + diphosphate + H(+). Its function is as follows. Catalyzes the attachment of threonine to tRNA(Thr) in a two-step reaction: L-threonine is first activated by ATP to form Thr-AMP and then transferred to the acceptor end of tRNA(Thr). Also edits incorrectly charged L-seryl-tRNA(Thr). The chain is Threonine--tRNA ligase from Neisseria gonorrhoeae (strain ATCC 700825 / FA 1090).